The following is a 1301-amino-acid chain: Dentin sialophosphoprotein (1301 aa).

The signal sequence occupies residues 1-15 (MKIITYFCIWAVAWA). Residues Asn41 and Asn49 are each glycosylated (N-linked (GlcNAc...) asparagine). The disordered stretch occupies residues 55–89 (KESGVLVHEGDRGRQENTQDGHKGEGNGSKWAEVG). The span at 62 to 79 (HEGDRGRQENTQDGHKGE) shows a compositional bias: basic and acidic residues. 7 N-linked (GlcNAc...) asparagine glycosylation sites follow: Asn81, Asn130, Asn150, Asn190, Asn191, Asn209, and Asn222. Residues 146–165 (AGATNRSNTNGNTDKNTQNG) are compositionally biased toward polar residues. Residues 146–171 (AGATNRSNTNGNTDKNTQNGDVGDAG) are disordered. The interval 202–1301 (NSCRNEGNTS…SDSNHSTSDD (1100 aa)) is disordered. The span at 203–221 (SCRNEGNTSEITPQINSKR) shows a compositional bias: polar residues. Over residues 251-267 (ADEDEDEGSGDDEDEEA) the composition is skewed to acidic residues. Ser259 is modified (phosphoserine; by CK1). Residues 271-280 (KDSSNNSKGQ) show a composition bias toward polar residues. N-linked (GlcNAc...) asparagine glycosylation occurs at Asn275. Basic and acidic residues-rich tracts occupy residues 281-293 (EGQDHGKEDDHDS) and 300-327 (DSKEYYDPEGKEDPHNEVDGDKTSKSEE). The residue at position 301 (Ser301) is a Phosphoserine. The N-linked (GlcNAc...) asparagine glycan is linked to Asn336. The segment covering 340-377 (RIEDTQKLNHRESKRVENRITKESETHAVGKSQDKGIE) has biased composition (basic and acidic residues). N-linked (GlcNAc...) asparagine glycosylation occurs at Asn387. Positions 388–404 (ITKEVGKGNEGKEDKGQ) are enriched in basic and acidic residues. 2 stretches are compositionally biased toward low complexity: residues 439-452 (SNTGSDSNSDGYDS) and 462-487 (GDDPNSSDESNGNDDANSESDNNSSS). The Cell attachment site motif lies at 488 to 490 (RGD). Positions 488-506 (RGDASYNSDESKDNGNGSD) are enriched in polar residues. Residues 518–534 (TSDTNNSDSNGNGNNGN) are compositionally biased toward low complexity. The segment covering 536–549 (DNDKSDSGKGKSDS) has biased composition (basic and acidic residues). The span at 555–564 (SDSSNSSDSS) shows a compositional bias: low complexity. The segment covering 581 to 595 (DSSDSDSSDSSDSDS) has biased composition (acidic residues). Positions 596-619 (SDSSNSSDSSDSSDSSDSSDSSDS) are enriched in low complexity. A compositionally biased stretch (basic and acidic residues) spans 620–642 (SDSKSDSSKSESDSSDSDSKSDS). 4 stretches are compositionally biased toward low complexity: residues 643–705 (SDSN…SDSS), 715–1264 (SSDS…STSD), 1272–1284 (QSKSGNGNNNGSD), and 1292–1301 (SDSNHSTSDD).

Interacts with FBLN7. In terms of processing, DSP is glycosylated. Expressed in teeth. DPP is synthesized by odontoblast and transiently expressed by pre-ameloblasts.

Its subcellular location is the secreted. It localises to the extracellular space. It is found in the extracellular matrix. Functionally, DSP may be an important factor in dentinogenesis. DPP may bind high amount of calcium and facilitate initial mineralization of dentin matrix collagen as well as regulate the size and shape of the crystals. The chain is Dentin sialophosphoprotein (DSPP) from Homo sapiens (Human).